The sequence spans 557 residues: Phosphoacetylglucosamine mutase (557 aa).

The active-site Phosphoserine intermediate is the S67. S67, D298, D300, and D302 together coordinate Mg(2+). S67 carries the post-translational modification Phosphoserine. Residues 395 to 397, 522 to 526, and R531 contribute to the substrate site; these read EAN and RASGT.

Belongs to the phosphohexose mutase family. Mg(2+) serves as cofactor.

The protein localises to the cytoplasm. It is found in the nucleus. It carries out the reaction N-acetyl-alpha-D-glucosamine 1-phosphate = N-acetyl-D-glucosamine 6-phosphate. It participates in nucleotide-sugar biosynthesis; UDP-N-acetyl-alpha-D-glucosamine biosynthesis; N-acetyl-alpha-D-glucosamine 1-phosphate from alpha-D-glucosamine 6-phosphate (route I): step 2/2. Functionally, catalyzes the conversion of GlcNAc-6-P into GlcNAc-1-P during the synthesis of uridine diphosphate/UDP-GlcNAc, which is a biosynthetic precursor of chitin and also supplies the amino sugars for N-linked oligosaccharides of glycoproteins. Also has phosphoglucomutase activity. In Saccharomyces cerevisiae (strain ATCC 204508 / S288c) (Baker's yeast), this protein is Phosphoacetylglucosamine mutase.